The primary structure comprises 828 residues: DNA gyrase subunit A (828 aa).

A Topo IIA-type catalytic domain is found at Leu-32–Leu-497. Catalysis depends on Tyr-120, which acts as the O-(5'-phospho-DNA)-tyrosine intermediate. The short motif at Gln-524–Gly-530 is the GyrA-box element.

Belongs to the type II topoisomerase GyrA/ParC subunit family. Heterotetramer, composed of two GyrA and two GyrB chains. In the heterotetramer, GyrA contains the active site tyrosine that forms a transient covalent intermediate with DNA, while GyrB binds cofactors and catalyzes ATP hydrolysis.

The protein resides in the cytoplasm. The enzyme catalyses ATP-dependent breakage, passage and rejoining of double-stranded DNA.. A type II topoisomerase that negatively supercoils closed circular double-stranded (ds) DNA in an ATP-dependent manner to modulate DNA topology and maintain chromosomes in an underwound state. Negative supercoiling favors strand separation, and DNA replication, transcription, recombination and repair, all of which involve strand separation. Also able to catalyze the interconversion of other topological isomers of dsDNA rings, including catenanes and knotted rings. Type II topoisomerases break and join 2 DNA strands simultaneously in an ATP-dependent manner. The protein is DNA gyrase subunit A of Streptococcus pyogenes serotype M1.